Consider the following 1051-residue polypeptide: Eukaryotic translation initiation factor 3 subunit A (1051 aa).

Positions Leu92–Ala121 form a coiled coil. Residues Met339 to Phe523 form the PCI domain. Residues Arg608–Lys905 adopt a coiled-coil conformation. 4 stretches are compositionally biased toward basic and acidic residues: residues Ala617 to Arg632, Glu642 to Gln664, Lys794 to Arg901, and Ala916 to Ala926. 2 disordered regions span residues Ala617–Gln664 and Lys794–Gln1051. Composition is skewed to low complexity over residues Lys948–Glu961 and Ser1010–Pro1039.

It belongs to the eIF-3 subunit A family. As to quaternary structure, component of the eukaryotic translation initiation factor 3 (eIF-3) complex.

It localises to the cytoplasm. RNA-binding component of the eukaryotic translation initiation factor 3 (eIF-3) complex, which is involved in protein synthesis of a specialized repertoire of mRNAs and, together with other initiation factors, stimulates binding of mRNA and methionyl-tRNAi to the 40S ribosome. The eIF-3 complex specifically targets and initiates translation of a subset of mRNAs involved in cell proliferation. In Aspergillus fumigatus (strain CBS 144.89 / FGSC A1163 / CEA10) (Neosartorya fumigata), this protein is Eukaryotic translation initiation factor 3 subunit A (tif32).